Reading from the N-terminus, the 332-residue chain is tRNA-dihydrouridine synthase B (332 aa).

Residues 16–18 (PMA) and glutamine 70 each bind FMN. Cysteine 100 functions as the Proton donor in the catalytic mechanism. FMN is bound by residues lysine 139, 200–202 (NGD), and 224–225 (GR).

Belongs to the Dus family. DusB subfamily. FMN is required as a cofactor.

It carries out the reaction a 5,6-dihydrouridine in tRNA + NAD(+) = a uridine in tRNA + NADH + H(+). The catalysed reaction is a 5,6-dihydrouridine in tRNA + NADP(+) = a uridine in tRNA + NADPH + H(+). In terms of biological role, catalyzes the synthesis of 5,6-dihydrouridine (D), a modified base found in the D-loop of most tRNAs, via the reduction of the C5-C6 double bond in target uridines. This chain is tRNA-dihydrouridine synthase B, found in Pasteurella multocida (strain Pm70).